A 723-amino-acid chain; its full sequence is Enolase-phosphatase E1 (723 aa).

Residues serine 126–serine 127 and lysine 160 each bind substrate. The disordered stretch occupies residues glycine 239–serine 723. 2 stretches are compositionally biased toward basic and acidic residues: residues valine 262–alanine 284 and alanine 293–valine 308. The span at alanine 311–aspartate 320 shows a compositional bias: low complexity. Basic and acidic residues-rich tracts occupy residues alanine 322–glutamate 406, alanine 419–glutamate 443, glutamate 468–alanine 479, threonine 487–alanine 496, serine 511–glutamate 565, and valine 577–alanine 593. Low complexity-rich tracts occupy residues valine 596 to glutamate 606 and asparagine 636 to valine 647. Residues glycine 653–aspartate 666 are compositionally biased toward basic and acidic residues.

The protein belongs to the HAD-like hydrolase superfamily. MasA/MtnC family. In terms of assembly, monomer.

The protein localises to the cytoplasm. The protein resides in the nucleus. The catalysed reaction is 5-methylsulfanyl-2,3-dioxopentyl phosphate + H2O = 1,2-dihydroxy-5-(methylsulfanyl)pent-1-en-3-one + phosphate. Its pathway is amino-acid biosynthesis; L-methionine biosynthesis via salvage pathway; L-methionine from S-methyl-5-thio-alpha-D-ribose 1-phosphate: step 3/6. It participates in amino-acid biosynthesis; L-methionine biosynthesis via salvage pathway; L-methionine from S-methyl-5-thio-alpha-D-ribose 1-phosphate: step 4/6. In terms of biological role, bifunctional enzyme that catalyzes the enolization of 2,3-diketo-5-methylthiopentyl-1-phosphate (DK-MTP-1-P) into the intermediate 2-hydroxy-3-keto-5-methylthiopentenyl-1-phosphate (HK-MTPenyl-1-P), which is then dephosphorylated to form the acireductone 1,2-dihydroxy-3-keto-5-methylthiopentene (DHK-MTPene). In Culex quinquefasciatus (Southern house mosquito), this protein is Enolase-phosphatase E1.